The sequence spans 259 residues: Small ribosomal subunit protein eS1 (259 aa).

Belongs to the eukaryotic ribosomal protein eS1 family. In terms of assembly, component of the small ribosomal subunit. Mature ribosomes consist of a small (40S) and a large (60S) subunit. The 40S subunit contains about 33 different proteins and 1 molecule of RNA (18S). The 60S subunit contains about 49 different proteins and 3 molecules of RNA (25S, 5.8S and 5S).

The protein resides in the cytoplasm. In Monosiga brevicollis (Choanoflagellate), this protein is Small ribosomal subunit protein eS1.